Here is a 525-residue protein sequence, read N- to C-terminus: Peptide chain release factor 3 (525 aa).

One can recognise a tr-type G domain in the interval 8 to 276; that stretch reads AMRRTFAIIS…AFVKEAPPPQ (269 aa). Residues 17-24, 85-89, and 139-142 contribute to the GTP site; these read SHPDAGKT, DTPGH, and NKMD.

Belongs to the TRAFAC class translation factor GTPase superfamily. Classic translation factor GTPase family. PrfC subfamily.

It localises to the cytoplasm. Functionally, increases the formation of ribosomal termination complexes and stimulates activities of RF-1 and RF-2. It binds guanine nucleotides and has strong preference for UGA stop codons. It may interact directly with the ribosome. The stimulation of RF-1 and RF-2 is significantly reduced by GTP and GDP, but not by GMP. The chain is Peptide chain release factor 3 from Coxiella burnetii (strain RSA 331 / Henzerling II).